The chain runs to 419 residues: Cytosine permease (419 aa).

Residues 1 to 19 (MSQDNNFSQGPVPQSARKG) are Cytoplasmic-facing. A helical membrane pass occupies residues 20 to 39 (VLALTFVMLGLTFFSASMWT). Residues 40–51 (GGTLGTGLSYHD) are Periplasmic-facing. The helical transmembrane segment at 52–71 (FFLAVLIGNLLLGIYTSFLG) threads the bilayer. Over 72–100 (YIGAKTGLTTHLLARFSFGVKGSWLPSLL) the chain is Cytoplasmic. The chain crosses the membrane as a helical span at residues 101 to 120 (LGGTQVGWFGVGVAMFAIPV). Topologically, residues 121–127 (GKATGLD) are periplasmic. Residues 128-147 (INLLIAVSGLLMTVTVFFGI) traverse the membrane as a helical segment. At 148 to 152 (SALTV) the chain is on the cytoplasmic side. A helical transmembrane segment spans residues 153-172 (LSLIAVPAIACLGGYSVWLA). Over 173–192 (VNGMGGLDALKAVVPAQPLD) the chain is Periplasmic. Residues 193–212 (FNVALALVVGSFISAGTLTA) form a helical membrane-spanning segment. At 213–221 (DFVRFGRNA) the chain is on the cytoplasmic side. A helical transmembrane segment spans residues 222-242 (KLAVLVAMVAFFLGNSLMFIF). Residues 243–257 (GAAGAAALGMADISD) lie on the Periplasmic side of the membrane. Residues 258-277 (VMIAQGLLLPAIVVLGLNIW) traverse the membrane as a helical segment. At 278–300 (TTNDNALYASGLGFANITGMSSK) the chain is on the cytoplasmic side. A helical transmembrane segment spans residues 301–320 (TLSVINGIIGTVCALWLYNN). Phe321 is a topological domain (periplasmic). The chain crosses the membrane as a helical span at residues 322–341 (VGWLTFLSAAIPPVGGVIIA). Over 342 to 358 (DYLMNRRRYEHFATTRM) the chain is Cytoplasmic. A helical transmembrane segment spans residues 359 to 378 (MSVNWVAILAVALGIAAGHW). At 379–380 (LP) the chain is on the periplasmic side. The helical transmembrane segment at 381 to 400 (GIVPVNAVLGGALSYLILNP) threads the bilayer. Residues 401 to 419 (ILNRKTTAAMTHVEANSVE) lie on the Cytoplasmic side of the membrane.

It belongs to the purine-cytosine permease (2.A.39) family.

It is found in the cell inner membrane. Functionally, required for cytosine transport into the cell. This chain is Cytosine permease (codB), found in Escherichia coli O157:H7.